A 450-amino-acid polypeptide reads, in one-letter code: Glucose-6-phosphate isomerase (450 aa).

E290 (proton donor) is an active-site residue. Active-site residues include H311 and K425.

The protein belongs to the GPI family.

Its subcellular location is the cytoplasm. The catalysed reaction is alpha-D-glucose 6-phosphate = beta-D-fructose 6-phosphate. It participates in carbohydrate biosynthesis; gluconeogenesis. It functions in the pathway carbohydrate degradation; glycolysis; D-glyceraldehyde 3-phosphate and glycerone phosphate from D-glucose: step 2/4. Its function is as follows. Catalyzes the reversible isomerization of glucose-6-phosphate to fructose-6-phosphate. The sequence is that of Glucose-6-phosphate isomerase from Lactiplantibacillus plantarum (strain ATCC BAA-793 / NCIMB 8826 / WCFS1) (Lactobacillus plantarum).